Reading from the N-terminus, the 232-residue chain is Sugar fermentation stimulation protein homolog (232 aa).

This sequence belongs to the SfsA family.

The sequence is that of Sugar fermentation stimulation protein homolog from Brucella anthropi (strain ATCC 49188 / DSM 6882 / CCUG 24695 / JCM 21032 / LMG 3331 / NBRC 15819 / NCTC 12168 / Alc 37) (Ochrobactrum anthropi).